The primary structure comprises 671 residues: MNNNQCMRKKLDELRNIARSYNISITGKKKQQLCDEIIDYQKNNPPRRSPSPRRSPSPRRISPECEQWLANKGINPRTGKAIKIGGPTYKKLEMECKEASPKIPSPVRQPSPVHSPVRSPVRQPSPVRFVEKTKGALNKMKKDQLIDFAQSLGLNPGKLLKPALVDLIFVNQKPPRRSPSPRRSPSPRRSPSPRRSPSPRPVFVEKTKGALNKMKKDQLIDLAQSLGLNPGKLLKPALVDLIFVNQKPVEPIRASSSSRSSRSTRRSSSTKPSRRSSSRSRRSSSRSRRSSSRSRRSSSRSRRSSRRSTSRSRSLSKRSIRNISTVGDLEDLVASNLPIAIPESLSRSLSPSRTDFHEAEIELGSDFDLNNLPENRIAELKQLNVLAKQNGFRMINVPLDGNCMFSVIGRAFNTSSSVIRQHTVDYLRRCKGSFDHIPANIDDPTINWNDYIDRLEEDACWGDNTALFAASLALNFQAHILQVAGGDEGSWIRFGVNETNMGRIVNMGYLDNFHYIALEPFSGRLDILSIPSTHSKCPPPEISNRRDEEIRRDEEVEDEVIGERIVREAEVIERELRQEEELTSIVSTKRSLRPSIPPKISTEHRRTPKLRPSVPRPSSIRQSQPNVAALARLETLTKIKDIIDALQRPLENKLSTLTNTEKAIMQCIGVA.

4 disordered regions span residues 36–62 (EIID…RRIS), 100–123 (SPKI…PVRQ), 171–203 (NQKP…RPVF), and 250–319 (EPIR…SKRS). Positions 110–123 (PSPVHSPVRSPVRQ) are enriched in low complexity. Residues 182–200 (RRSPSPRRSPSPRRSPSPR) show a composition bias toward pro residues. The span at 255 to 271 (SSSSRSSRSTRRSSSTK) shows a compositional bias: low complexity. Basic residues predominate over residues 272 to 319 (PSRRSSSRSRRSSSRSRRSSSRSRRSSSRSRRSSRRSTSRSRSLSKRS). The OTU domain occupies 392–521 (FRMINVPLDG…NFHYIALEPF (130 aa)). Aspartate 400 is a catalytic residue. The active-site Nucleophile is cysteine 403. Residue histidine 514 is part of the active site. The tract at residues 589–625 (KRSLRPSIPPKISTEHRRTPKLRPSVPRPSSIRQSQP) is disordered.

The enzyme catalyses Thiol-dependent hydrolysis of ester, thioester, amide, peptide and isopeptide bonds formed by the C-terminal Gly of ubiquitin (a 76-residue protein attached to proteins as an intracellular targeting signal).. In terms of biological role, hydrolase that can remove conjugated ubiquitin from proteins and may therefore play an important regulatory role at the level of protein turnover by preventing degradation. In Acheta domesticus (House cricket), this protein is Putative ubiquitin thioesterase 232R.